The following is a 468-amino-acid chain: Sorting and assembly machinery component 50 homolog A (468 aa).

Positions 1–24 are disordered; sequence MGTVHARSLDPLPMNGPDFGSPDD. One can recognise a POTRA domain in the interval 44 to 124; the sequence is VVVQRVHFEG…LDVTFEVTEL (81 aa).

Belongs to the SAM50/omp85 family. In terms of assembly, associates with the mitochondrial contact site and cristae organizing system (MICOS) complex (also known as MINOS or MitOS complex).

It is found in the mitochondrion outer membrane. Functionally, may play a role in the maintenance of the structure of mitochondrial cristae. The polypeptide is Sorting and assembly machinery component 50 homolog A (samm50-a) (Xenopus laevis (African clawed frog)).